We begin with the raw amino-acid sequence, 404 residues long: UBP1-associated protein 2C (404 aa).

The disordered stretch occupies residues 1–29; sequence MDMMKKRKLDENGNGLNTNGGGTIGPTRL. RRM domains follow at residues 75 to 152 and 167 to 248; these read RKLF…LAAS and RKIY…GKKG. Disordered regions lie at residues 246–270 and 344–404; these read KKGGKPGMPQAQDGGSGHGHVHGEG and GSGQ…PPNY.

Expressed in root apical and lateral meristems, young leaves and embryos.

The protein localises to the nucleus. Functionally, heterogeneous nuclear ribonucleoprotein (hnRNP)-like protein that acts as a component of a complex regulating the turnover of mRNAs in the nucleus. Binds with high affinity to RNA molecules that contain U-rich sequences in 3'-UTRs. May function in complex with UBP1 and contribute to the stabilization of mRNAs in the nucleus. The sequence is that of UBP1-associated protein 2C (UBA2C) from Arabidopsis thaliana (Mouse-ear cress).